We begin with the raw amino-acid sequence, 278 residues long: Undecaprenyl-diphosphatase 3 (278 aa).

6 consecutive transmembrane segments (helical) span residues 42 to 62, 88 to 108, 119 to 139, 187 to 207, 224 to 244, and 254 to 274; these read DITA…LLYF, YRFG…GVAF, LWFV…ADHV, VAVT…AAAL, ATII…AWLL, and VFIG…ATGI.

This sequence belongs to the UppP family.

The protein localises to the cell membrane. It catalyses the reaction di-trans,octa-cis-undecaprenyl diphosphate + H2O = di-trans,octa-cis-undecaprenyl phosphate + phosphate + H(+). Catalyzes the dephosphorylation of undecaprenyl diphosphate (UPP). Confers resistance to bacitracin. The sequence is that of Undecaprenyl-diphosphatase 3 from Frankia casuarinae (strain DSM 45818 / CECT 9043 / HFP020203 / CcI3).